An 84-amino-acid chain; its full sequence is Omega-theraphotoxin-Pm1a (84 aa).

The signal sequence occupies residues 1-21 (MKTSMLAVFVALPLAFVLTAA). A propeptide spanning residues 22-45 (TEERAHPNELVNSLVELVKLDAER) is cleaved from the precursor. Disulfide bonds link C52-C66, C59-C71, and C65-C78.

Belongs to the neurotoxin 10 (Hwtx-1) family. 41 (Jztx-36) subfamily. In terms of tissue distribution, expressed by the venom gland.

The protein resides in the secreted. In terms of biological role, omega-conotoxins act at presynaptic membranes, they bind and block voltage-gated calcium channels (Cav). This toxin inhibits barium currents (IBa) mediated by L-type voltage-gated calcium channels Cav1.2/CACNA1C (IC(50)=825 nM) and Cav1.3/CACNA1C (IC(50)=2240 nM). The chain is Omega-theraphotoxin-Pm1a from Pelinobius muticus (King baboon spider).